A 273-amino-acid polypeptide reads, in one-letter code: Ribosomal RNA small subunit methyltransferase A (273 aa).

6 residues coordinate S-adenosyl-L-methionine: N20, L22, G47, E68, D90, and N110.

This sequence belongs to the class I-like SAM-binding methyltransferase superfamily. rRNA adenine N(6)-methyltransferase family. RsmA subfamily.

The protein localises to the cytoplasm. The catalysed reaction is adenosine(1518)/adenosine(1519) in 16S rRNA + 4 S-adenosyl-L-methionine = N(6)-dimethyladenosine(1518)/N(6)-dimethyladenosine(1519) in 16S rRNA + 4 S-adenosyl-L-homocysteine + 4 H(+). Its function is as follows. Specifically dimethylates two adjacent adenosines (A1518 and A1519) in the loop of a conserved hairpin near the 3'-end of 16S rRNA in the 30S particle. May play a critical role in biogenesis of 30S subunits. This Chlorobium luteolum (strain DSM 273 / BCRC 81028 / 2530) (Pelodictyon luteolum) protein is Ribosomal RNA small subunit methyltransferase A.